The chain runs to 122 residues: Large ribosomal subunit protein uL14 (122 aa).

Belongs to the universal ribosomal protein uL14 family. In terms of assembly, part of the 50S ribosomal subunit. Forms a cluster with proteins L3 and L19. In the 70S ribosome, L14 and L19 interact and together make contacts with the 16S rRNA in bridges B5 and B8.

Functionally, binds to 23S rRNA. Forms part of two intersubunit bridges in the 70S ribosome. This is Large ribosomal subunit protein uL14 from Chloroflexus aurantiacus (strain ATCC 29366 / DSM 635 / J-10-fl).